A 553-amino-acid chain; its full sequence is MLNNRACKVGAFLMALFFVITYLLPLNGRLLWQPDETRYAEISREMLQRGDWIVPYLLDIRYFEKPVAGYWINNISQWIFGDNNFAVRFGSVFCIFISAILLYRLAMMMWHNRHIAFATSLIYISMFLVFAIGTYSVLDPMFSLWVTAAMMCSFWGLKTDCTRRRIMAYLVLGLCCGMGFMTKGFLALAVPVIVMLPIVIYQKRVLQIVCFGPLAIISAIAISLPWVIAIALREPDYWHYFFWVEHIKRFSSDDAQHIAPFWYYIPILILGVIPWLGLLPGAVMKSWKERKSNPEMFFLLCWFVVPLLFFSIAKGKLPTYILPCMAPLAMMMAKFGVDCVKNGKMELLKINGMVNVFLGLLAVIVLFAMEVVTKHALYQPSEWLKWVLAIVAFGIWGIIGYLCFALNGKYWLLAAFCSIVVSLVIGHALPENTVNSKLPQNFIKLHHQELAGSRYILSESVGLATSVAWEMKRSDIYMFERWGELEYGLNYPDSRYRYISYKDFPQWLAKARKEGRVSVLFHLYKDEKLPDLPKADQISRNYRFAILVYEKQP.

11 consecutive transmembrane segments (helical) span residues 6-26, 89-109, 115-135, 180-200, 208-228, 258-278, 293-313, 317-337, 352-372, 386-406, and 410-430; these read ACKV…LLPL, FGSV…AMMM, IAFA…IGTY, FMTK…PIVI, IVCF…PWVI, IAPF…WLGL, NPEM…FSIA, LPTY…KFGV, GMVN…MEVV, WVLA…CFAL, and YWLL…HALP.

Belongs to the glycosyltransferase 83 family.

Its subcellular location is the cell inner membrane. The catalysed reaction is 4-amino-4-deoxy-alpha-L-arabinopyranosyl di-trans,octa-cis-undecaprenyl phosphate + lipid IVA = lipid IIA + di-trans,octa-cis-undecaprenyl phosphate.. Its pathway is lipopolysaccharide metabolism; 4-amino-4-deoxy-beta-L-arabinose-lipid A biosynthesis. Functionally, catalyzes the transfer of the L-Ara4N moiety of the glycolipid undecaprenyl phosphate-alpha-L-Ara4N to lipid A. The modified arabinose is attached to lipid A and is required for resistance to polymyxin and cationic antimicrobial peptides. The chain is Undecaprenyl phosphate-alpha-4-amino-4-deoxy-L-arabinose arabinosyl transferase (arnT) from Photorhabdus laumondii subsp. laumondii (strain DSM 15139 / CIP 105565 / TT01) (Photorhabdus luminescens subsp. laumondii).